Here is a 160-residue protein sequence, read N- to C-terminus: Envelope glycoprotein L (160 aa).

An N-terminal signal peptide occupies residues 1 to 22; the sequence is MASHKWLLQMIVFLKTITIAYC. The tract at residues 24–149 is interaction with gH; it reads HLQDDTPLFF…TNIPENGCVW (126 aa). The gL alphaherpesvirus-type domain occupies 28–160; sequence DTPLFFGAKP…ADRLFQRVCQ (133 aa). Cystine bridges form between Cys-49–Cys-80 and Cys-147–Cys-159.

Belongs to the herpesviridae glycoprotein L (gL) family. Alphaherpesvirinae gL subfamily. In terms of assembly, interacts with glycoprotein H (gH); this interaction is necessary for the correct processing and cell surface expression of gH. The heterodimer gH/gL seems to interact with gB trimers during fusion.

The protein resides in the virion membrane. Its subcellular location is the host cell membrane. It localises to the host Golgi apparatus. The protein localises to the host trans-Golgi network. Functionally, the heterodimer glycoprotein H-glycoprotein L is required for the fusion of viral and plasma membranes leading to virus entry into the host cell. Acts as a functional inhibitor of gH and maintains gH in an inhibited form. Upon binding to host integrins, gL dissociates from gH leading to activation of the viral fusion glycoproteins gB and gH. The polypeptide is Envelope glycoprotein L (Varicella-zoster virus (strain Oka vaccine) (HHV-3)).